Consider the following 150-residue polypeptide: uncharacterized protein (150 aa).

The region spanning 1-133 (MNDILREIGM…ISALLHRVRK (133 aa)) is the HTH marR-type domain. Positions 47–70 (QEKLAEMIKVDRTTAARAIKKLEM) form a DNA-binding region, H-T-H motif.

This is an uncharacterized protein from Bacillus subtilis (strain 168).